The sequence spans 120 residues: Putative defensin-like protein 179 (120 aa).

The first 27 residues, 1 to 27 (MERTSTSLLFLLSLLIIFASAVNQIRA), serve as a signal peptide directing secretion. 7 disulfides stabilise this stretch: cysteine 37–cysteine 56, cysteine 40–cysteine 63, cysteine 44–cysteine 65, cysteine 74–cysteine 120, cysteine 85–cysteine 105, cysteine 90–cysteine 114, and cysteine 94–cysteine 116.

It belongs to the DEFL family.

It is found in the secreted. This chain is Putative defensin-like protein 179 (LCR57), found in Arabidopsis thaliana (Mouse-ear cress).